The following is a 225-amino-acid chain: Deoxyribose-phosphate aldolase (225 aa).

D96 serves as the catalytic Proton donor/acceptor. K157 acts as the Schiff-base intermediate with acetaldehyde in catalysis. Catalysis depends on K185, which acts as the Proton donor/acceptor.

It belongs to the DeoC/FbaB aldolase family. DeoC type 1 subfamily.

It is found in the cytoplasm. The enzyme catalyses 2-deoxy-D-ribose 5-phosphate = D-glyceraldehyde 3-phosphate + acetaldehyde. The protein operates within carbohydrate degradation; 2-deoxy-D-ribose 1-phosphate degradation; D-glyceraldehyde 3-phosphate and acetaldehyde from 2-deoxy-alpha-D-ribose 1-phosphate: step 2/2. Functionally, catalyzes a reversible aldol reaction between acetaldehyde and D-glyceraldehyde 3-phosphate to generate 2-deoxy-D-ribose 5-phosphate. The protein is Deoxyribose-phosphate aldolase of Microcystis aeruginosa (strain NIES-843 / IAM M-2473).